The following is a 337-amino-acid chain: Inositol 2-dehydrogenase (337 aa).

It belongs to the Gfo/Idh/MocA family. In terms of assembly, homotetramer.

The enzyme catalyses myo-inositol + NAD(+) = scyllo-inosose + NADH + H(+). Functionally, involved in the oxidation of myo-inositol (MI) to 2-keto-myo-inositol (2KMI or 2-inosose). This chain is Inositol 2-dehydrogenase, found in Burkholderia lata (strain ATCC 17760 / DSM 23089 / LMG 22485 / NCIMB 9086 / R18194 / 383).